We begin with the raw amino-acid sequence, 225 residues long: Uridylate kinase (225 aa).

9–10 lines the ATP pocket; sequence GS. Glycine 46 contributes to the UMP binding site. Residues glycine 47 and arginine 51 each coordinate ATP. UMP-binding positions include aspartate 67 and 115–121; that span reads THPAHTT. Residues threonine 141, asparagine 142, tyrosine 147, and aspartate 150 each contribute to the ATP site.

Belongs to the UMP kinase family. Homohexamer.

The protein localises to the cytoplasm. It carries out the reaction UMP + ATP = UDP + ADP. It participates in pyrimidine metabolism; CTP biosynthesis via de novo pathway; UDP from UMP (UMPK route): step 1/1. Inhibited by UTP. Catalyzes the reversible phosphorylation of UMP to UDP. The sequence is that of Uridylate kinase from Methanococcus maripaludis (strain C6 / ATCC BAA-1332).